We begin with the raw amino-acid sequence, 315 residues long: Pantothenate kinase (315 aa).

Position 94–101 (G94–S101) interacts with ATP.

The protein belongs to the prokaryotic pantothenate kinase family.

The protein localises to the cytoplasm. The enzyme catalyses (R)-pantothenate + ATP = (R)-4'-phosphopantothenate + ADP + H(+). Its pathway is cofactor biosynthesis; coenzyme A biosynthesis; CoA from (R)-pantothenate: step 1/5. This Citrobacter koseri (strain ATCC BAA-895 / CDC 4225-83 / SGSC4696) protein is Pantothenate kinase.